The following is a 148-amino-acid chain: 3-hydroxyacyl-[acyl-carrier-protein] dehydratase FabZ (148 aa).

Residue His-50 is part of the active site.

It belongs to the thioester dehydratase family. FabZ subfamily.

It is found in the cytoplasm. The catalysed reaction is a (3R)-hydroxyacyl-[ACP] = a (2E)-enoyl-[ACP] + H2O. Involved in unsaturated fatty acids biosynthesis. Catalyzes the dehydration of short chain beta-hydroxyacyl-ACPs and long chain saturated and unsaturated beta-hydroxyacyl-ACPs. This Lactobacillus helveticus (strain DPC 4571) protein is 3-hydroxyacyl-[acyl-carrier-protein] dehydratase FabZ.